Reading from the N-terminus, the 156-residue chain is Transcriptional repressor NrdR (156 aa).

A zinc finger lies at 3–34 (CPYCGHLEDRVVDSRETQDGQATRRRRACLSC). An ATP-cone domain is found at 49-139 (PQVVKKDGRR…VYRAFRDVGE (91 aa)).

This sequence belongs to the NrdR family. The cofactor is Zn(2+).

In terms of biological role, negatively regulates transcription of bacterial ribonucleotide reductase nrd genes and operons by binding to NrdR-boxes. In Anaeromyxobacter dehalogenans (strain 2CP-C), this protein is Transcriptional repressor NrdR.